We begin with the raw amino-acid sequence, 233 residues long: Purine nucleoside phosphorylase DeoD-type (233 aa).

H4 provides a ligand contact to a purine D-ribonucleoside. Residues G20, R24, R43, and 87-90 (RIGT) each bind phosphate. A purine D-ribonucleoside is bound by residues 179–181 (EME) and 203–204 (SD). D204 serves as the catalytic Proton donor.

The protein belongs to the PNP/UDP phosphorylase family. Homohexamer; trimer of homodimers.

The enzyme catalyses a purine D-ribonucleoside + phosphate = a purine nucleobase + alpha-D-ribose 1-phosphate. The catalysed reaction is a purine 2'-deoxy-D-ribonucleoside + phosphate = a purine nucleobase + 2-deoxy-alpha-D-ribose 1-phosphate. Functionally, catalyzes the reversible phosphorolytic breakdown of the N-glycosidic bond in the beta-(deoxy)ribonucleoside molecules, with the formation of the corresponding free purine bases and pentose-1-phosphate. The protein is Purine nucleoside phosphorylase DeoD-type of Helicobacter pylori (strain ATCC 700392 / 26695) (Campylobacter pylori).